A 258-amino-acid chain; its full sequence is Protease HtpX homolog (258 aa).

Helical transmembrane passes span 24–44 (VLLF…LGLG) and 45–65 (GPLF…LISP). H146 contributes to the Zn(2+) binding site. The active site involves E147. H150 is a binding site for Zn(2+). Transmembrane regions (helical) follow at residues 157–177 (IVMT…WSTV) and 186–206 (LVGI…LFIS). E210 serves as a coordination point for Zn(2+).

Belongs to the peptidase M48B family. The cofactor is Zn(2+).

The protein resides in the cell membrane. This Methanothermobacter thermautotrophicus (strain ATCC 29096 / DSM 1053 / JCM 10044 / NBRC 100330 / Delta H) (Methanobacterium thermoautotrophicum) protein is Protease HtpX homolog.